The sequence spans 461 residues: ATP synthase subunit beta 2 (461 aa).

151 to 158 lines the ATP pocket; the sequence is GGAGVGKT.

The protein belongs to the ATPase alpha/beta chains family. As to quaternary structure, F-type ATPases have 2 components, CF(1) - the catalytic core - and CF(0) - the membrane proton channel. CF(1) has five subunits: alpha(3), beta(3), gamma(1), delta(1), epsilon(1). CF(0) has three main subunits: a(1), b(2) and c(9-12). The alpha and beta chains form an alternating ring which encloses part of the gamma chain. CF(1) is attached to CF(0) by a central stalk formed by the gamma and epsilon chains, while a peripheral stalk is formed by the delta and b chains.

The protein resides in the cell inner membrane. It carries out the reaction ATP + H2O + 4 H(+)(in) = ADP + phosphate + 5 H(+)(out). Functionally, produces ATP from ADP in the presence of a proton gradient across the membrane. The catalytic sites are hosted primarily by the beta subunits. In Pseudoalteromonas atlantica (strain T6c / ATCC BAA-1087), this protein is ATP synthase subunit beta 2.